Reading from the N-terminus, the 188-residue chain is Elongation factor P (188 aa).

N6-(3,6-diaminohexanoyl)-5-hydroxylysine is present on Lys34.

The protein belongs to the elongation factor P family. May be beta-lysylated on the epsilon-amino group of Lys-34 by the combined action of EpmA and EpmB, and then hydroxylated on the C5 position of the same residue by EpmC (if this protein is present). Lysylation is critical for the stimulatory effect of EF-P on peptide-bond formation. The lysylation moiety may extend toward the peptidyltransferase center and stabilize the terminal 3-CCA end of the tRNA. Hydroxylation of the C5 position on Lys-34 may allow additional potential stabilizing hydrogen-bond interactions with the P-tRNA.

The protein localises to the cytoplasm. It functions in the pathway protein biosynthesis; polypeptide chain elongation. Functionally, involved in peptide bond synthesis. Alleviates ribosome stalling that occurs when 3 or more consecutive Pro residues or the sequence PPG is present in a protein, possibly by augmenting the peptidyl transferase activity of the ribosome. Modification of Lys-34 is required for alleviation. The polypeptide is Elongation factor P (Pectobacterium atrosepticum (strain SCRI 1043 / ATCC BAA-672) (Erwinia carotovora subsp. atroseptica)).